The chain runs to 890 residues: Translation initiation factor IF-2 (890 aa).

Positions 45–304 (LIDHLNQKNS…LQQGFQKPAQ (260 aa)) are disordered. The span at 67–81 (STLNIPGTGGKSKSV) shows a compositional bias: polar residues. The segment covering 92 to 217 (VKRDPQEAER…RMAEENKWTD (126 aa)) has biased composition (basic and acidic residues). Positions 252 to 266 (GRGRNAKAARPKKGN) are enriched in basic residues. Residues 267–280 (KHAESKADREEARA) show a composition bias toward basic and acidic residues. Residues 389-558 (PRAPVVTIMG…LLQAEVLELK (170 aa)) enclose the tr-type G domain. The segment at 398–405 (GHVDHGKT) is G1. 398-405 (GHVDHGKT) contributes to the GTP binding site. Positions 423-427 (GITQH) are G2. A G3 region spans residues 444–447 (DTPG). GTP contacts are provided by residues 444–448 (DTPGH) and 498–501 (NKID). Residues 498–501 (NKID) form a G4 region. Residues 534-536 (SAK) are G5. Residue K808 is modified to N6-acetyllysine.

Belongs to the TRAFAC class translation factor GTPase superfamily. Classic translation factor GTPase family. IF-2 subfamily.

The protein localises to the cytoplasm. Its function is as follows. One of the essential components for the initiation of protein synthesis. Protects formylmethionyl-tRNA from spontaneous hydrolysis and promotes its binding to the 30S ribosomal subunits. Also involved in the hydrolysis of GTP during the formation of the 70S ribosomal complex. The chain is Translation initiation factor IF-2 from Shigella sonnei (strain Ss046).